Here is a 135-residue protein sequence, read N- to C-terminus: Cytochrome c-type biogenesis protein CcmE (135 aa).

Residues 1-8 are Cytoplasmic-facing; sequence MLLLRWKR. A helical; Signal-anchor for type II membrane protein transmembrane segment spans residues 9-29; it reads FWFLSLGILLFSGVVSLMLFN. Residues 30–135 lie on the Periplasmic side of the membrane; it reads LSESISFFYL…EDFIKSVRGE (106 aa). Residues His118 and Tyr122 each coordinate heme.

This sequence belongs to the CcmE/CycJ family.

It is found in the cell inner membrane. Its function is as follows. Heme chaperone required for the biogenesis of c-type cytochromes. Transiently binds heme delivered by CcmC and transfers the heme to apo-cytochromes in a process facilitated by CcmF and CcmH. This Neorickettsia sennetsu (strain ATCC VR-367 / Miyayama) (Ehrlichia sennetsu) protein is Cytochrome c-type biogenesis protein CcmE.